A 57-amino-acid chain; its full sequence is Lantibiotic nukacin (57 aa).

The propeptide occupies 1–30 (MENSKVMKDIEVANLLEEVQEDELNEVLGA). Residues 39–44 (TVSHDC) constitute a cross-link (beta-methyllanthionine (Thr-Cys)). 2 cross-links (lanthionine (Ser-Cys)) span residues 41 to 55 (SHDC…VFTC) and 48 to 56 (SFQFVFTCC). T54 carries the 2,3-didehydrobutyrine modification.

Maturation of lantibiotics involves the enzymatic conversion of Thr, and Ser into dehydrated AA and the formation of thioether bonds with cysteine. This is followed by membrane translocation and cleavage of the modified precursor.

Its subcellular location is the secreted. Lanthionine-containing peptide antibiotic (lantibiotic) active on Gram-positive bacteria. The bactericidal activity of lantibiotics is based on depolarization of energized bacterial cytoplasmic membranes, initiated by the formation of aqueous transmembrane pores. This is Lantibiotic nukacin from Staphylococcus simulans.